The primary structure comprises 120 residues: Small ribosomal subunit protein uS12 (120 aa).

The residue at position 88 (Asp-88) is a 3-methylthioaspartic acid.

This sequence belongs to the universal ribosomal protein uS12 family. In terms of assembly, part of the 30S ribosomal subunit. Contacts proteins S8 and S17. May interact with IF1 in the 30S initiation complex.

With S4 and S5 plays an important role in translational accuracy. In terms of biological role, interacts with and stabilizes bases of the 16S rRNA that are involved in tRNA selection in the A site and with the mRNA backbone. Located at the interface of the 30S and 50S subunits, it traverses the body of the 30S subunit contacting proteins on the other side and probably holding the rRNA structure together. The combined cluster of proteins S8, S12 and S17 appears to hold together the shoulder and platform of the 30S subunit. The protein is Small ribosomal subunit protein uS12 of Carsonella ruddii (strain PV).